The primary structure comprises 275 residues: Translation initiation factor 2 subunit alpha (275 aa).

Residues 12 to 83 (GEFVIATVKS…NKGHIDLSLK (72 aa)) enclose the S1 motif domain.

The protein belongs to the eIF-2-alpha family. As to quaternary structure, heterotrimer composed of an alpha, a beta and a gamma chain.

Functionally, eIF-2 functions in the early steps of protein synthesis by forming a ternary complex with GTP and initiator tRNA. This chain is Translation initiation factor 2 subunit alpha, found in Thermococcus onnurineus (strain NA1).